The following is a 190-amino-acid chain: Pyridoxal 5'-phosphate synthase subunit PdxT (190 aa).

46–48 (GES) contacts L-glutamine. The Nucleophile role is filled by Cys-78. L-glutamine is bound by residues Arg-106 and 135–136 (IR). Catalysis depends on charge relay system residues His-171 and Glu-173.

The protein belongs to the glutaminase PdxT/SNO family. In the presence of PdxS, forms a dodecamer of heterodimers. Only shows activity in the heterodimer.

It catalyses the reaction aldehydo-D-ribose 5-phosphate + D-glyceraldehyde 3-phosphate + L-glutamine = pyridoxal 5'-phosphate + L-glutamate + phosphate + 3 H2O + H(+). It carries out the reaction L-glutamine + H2O = L-glutamate + NH4(+). It participates in cofactor biosynthesis; pyridoxal 5'-phosphate biosynthesis. Its function is as follows. Catalyzes the hydrolysis of glutamine to glutamate and ammonia as part of the biosynthesis of pyridoxal 5'-phosphate. The resulting ammonia molecule is channeled to the active site of PdxS. This chain is Pyridoxal 5'-phosphate synthase subunit PdxT, found in Dictyoglomus turgidum (strain DSM 6724 / Z-1310).